The primary structure comprises 158 residues: NAD(P)H-quinone oxidoreductase subunit J, chloroplastic (158 aa).

Belongs to the complex I 30 kDa subunit family. As to quaternary structure, NDH is composed of at least 16 different subunits, 5 of which are encoded in the nucleus.

It is found in the plastid. The protein localises to the chloroplast thylakoid membrane. It catalyses the reaction a plastoquinone + NADH + (n+1) H(+)(in) = a plastoquinol + NAD(+) + n H(+)(out). It carries out the reaction a plastoquinone + NADPH + (n+1) H(+)(in) = a plastoquinol + NADP(+) + n H(+)(out). In terms of biological role, NDH shuttles electrons from NAD(P)H:plastoquinone, via FMN and iron-sulfur (Fe-S) centers, to quinones in the photosynthetic chain and possibly in a chloroplast respiratory chain. The immediate electron acceptor for the enzyme in this species is believed to be plastoquinone. Couples the redox reaction to proton translocation, and thus conserves the redox energy in a proton gradient. The polypeptide is NAD(P)H-quinone oxidoreductase subunit J, chloroplastic (Panax ginseng (Korean ginseng)).